Here is a 247-residue protein sequence, read N- to C-terminus: 1-(5-phosphoribosyl)-5-[(5-phosphoribosylamino)methylideneamino] imidazole-4-carboxamide isomerase (247 aa).

Aspartate 16 functions as the Proton acceptor in the catalytic mechanism. The active-site Proton donor is aspartate 135.

It belongs to the HisA/HisF family.

It localises to the cytoplasm. It carries out the reaction 1-(5-phospho-beta-D-ribosyl)-5-[(5-phospho-beta-D-ribosylamino)methylideneamino]imidazole-4-carboxamide = 5-[(5-phospho-1-deoxy-D-ribulos-1-ylimino)methylamino]-1-(5-phospho-beta-D-ribosyl)imidazole-4-carboxamide. It functions in the pathway amino-acid biosynthesis; L-histidine biosynthesis; L-histidine from 5-phospho-alpha-D-ribose 1-diphosphate: step 4/9. The polypeptide is 1-(5-phosphoribosyl)-5-[(5-phosphoribosylamino)methylideneamino] imidazole-4-carboxamide isomerase (Paenarthrobacter aurescens (strain TC1)).